Reading from the N-terminus, the 504-residue chain is Apolipoprotein N-acyltransferase (504 aa).

6 helical membrane passes run 6–26 (LALT…YALV), 47–67 (ALYG…WVFV), 83–103 (LTAL…WLGV), 105–125 (AGGG…WVVT), 153–173 (IAPV…AGLL), and 186–206 (FALL…KVQW). Positions 219-457 (LQGNVPQDQK…REALTGMMQP (239 aa)) constitute a CN hydrolase domain. The Proton acceptor role is filled by Glu-258. Lys-317 is a catalytic residue. The Nucleophile role is filled by Cys-369. A helical transmembrane segment spans residues 465 to 485 (ALWGDWPAIGLCAGIVGICFA).

It belongs to the CN hydrolase family. Apolipoprotein N-acyltransferase subfamily.

The protein localises to the cell inner membrane. The enzyme catalyses N-terminal S-1,2-diacyl-sn-glyceryl-L-cysteinyl-[lipoprotein] + a glycerophospholipid = N-acyl-S-1,2-diacyl-sn-glyceryl-L-cysteinyl-[lipoprotein] + a 2-acyl-sn-glycero-3-phospholipid + H(+). It participates in protein modification; lipoprotein biosynthesis (N-acyl transfer). Functionally, catalyzes the phospholipid dependent N-acylation of the N-terminal cysteine of apolipoprotein, the last step in lipoprotein maturation. In Methylococcus capsulatus (strain ATCC 33009 / NCIMB 11132 / Bath), this protein is Apolipoprotein N-acyltransferase.